We begin with the raw amino-acid sequence, 205 residues long: Ribosomal RNA small subunit methyltransferase G (205 aa).

Residues glycine 73, leucine 78, 124-125, and arginine 139 contribute to the S-adenosyl-L-methionine site; that span reads VE.

Belongs to the methyltransferase superfamily. RNA methyltransferase RsmG family.

It localises to the cytoplasm. It carries out the reaction guanosine(527) in 16S rRNA + S-adenosyl-L-methionine = N(7)-methylguanosine(527) in 16S rRNA + S-adenosyl-L-homocysteine. Specifically methylates the N7 position of guanine in position 527 of 16S rRNA. This chain is Ribosomal RNA small subunit methyltransferase G, found in Methylobacillus flagellatus (strain ATCC 51484 / DSM 6875 / VKM B-1610 / KT).